Here is a 440-residue protein sequence, read N- to C-terminus: 3-phosphoshikimate 1-carboxyvinyltransferase (440 aa).

The 3-phosphoshikimate site is built by Lys-25, Ser-26, and Arg-30. Lys-25 is a binding site for phosphoenolpyruvate. Residues Gly-96 and Arg-124 each contribute to the phosphoenolpyruvate site. Residues Ser-168, Gln-169, Asp-310, and Lys-337 each contribute to the 3-phosphoshikimate site. Gln-169 serves as a coordination point for phosphoenolpyruvate. Asp-310 (proton acceptor) is an active-site residue. 3 residues coordinate phosphoenolpyruvate: Arg-341, Arg-382, and Lys-409.

The protein belongs to the EPSP synthase family. Monomer.

The protein localises to the cytoplasm. It carries out the reaction 3-phosphoshikimate + phosphoenolpyruvate = 5-O-(1-carboxyvinyl)-3-phosphoshikimate + phosphate. It functions in the pathway metabolic intermediate biosynthesis; chorismate biosynthesis; chorismate from D-erythrose 4-phosphate and phosphoenolpyruvate: step 6/7. In terms of biological role, catalyzes the transfer of the enolpyruvyl moiety of phosphoenolpyruvate (PEP) to the 5-hydroxyl of shikimate-3-phosphate (S3P) to produce enolpyruvyl shikimate-3-phosphate and inorganic phosphate. This chain is 3-phosphoshikimate 1-carboxyvinyltransferase, found in Chlamydia trachomatis serovar A (strain ATCC VR-571B / DSM 19440 / HAR-13).